A 120-amino-acid chain; its full sequence is Holo-[acyl-carrier-protein] synthase (120 aa).

Asp-6 and Glu-55 together coordinate Mg(2+).

This sequence belongs to the P-Pant transferase superfamily. AcpS family. It depends on Mg(2+) as a cofactor.

The protein resides in the cytoplasm. The catalysed reaction is apo-[ACP] + CoA = holo-[ACP] + adenosine 3',5'-bisphosphate + H(+). Transfers the 4'-phosphopantetheine moiety from coenzyme A to a Ser of acyl-carrier-protein. This Pelodictyon phaeoclathratiforme (strain DSM 5477 / BU-1) protein is Holo-[acyl-carrier-protein] synthase.